The sequence spans 713 residues: Mitochondrial intermediate peptidase (713 aa).

Residues 1–35 constitute a mitochondrion transit peptide; sequence MLCVGRLGGLGARAAALPPRRAGRGSLEAGIRARR. K126 is subject to N6-acetyllysine. Zn(2+) is bound at residue H495. Residue E496 is part of the active site. Residues H499 and H502 each coordinate Zn(2+).

This sequence belongs to the peptidase M3 family. Monomer. It depends on Zn(2+) as a cofactor.

Its subcellular location is the mitochondrion matrix. It carries out the reaction Release of an N-terminal octapeptide as second stage of processing of some proteins imported into the mitochondrion.. Its activity is regulated as follows. Activity is divalent cation-dependent. It is stimulated by manganese, magnesium or calcium ions and reversibly inhibited by zinc, cobalt and iron. Its function is as follows. Cleaves proteins, imported into the mitochondrion, to their mature size. In Homo sapiens (Human), this protein is Mitochondrial intermediate peptidase (MIPEP).